Reading from the N-terminus, the 822-residue chain is BDNF/NT-3 growth factors receptor (822 aa).

Positions 1–31 are cleaved as a signal peptide; that stretch reads MSSWIRWHGPAMARLWGFCWLVVGFWRAAFA. Disulfide bonds link cysteine 32–cysteine 38 and cysteine 36–cysteine 45. Residues 32-61 form the LRRNT domain; that stretch reads CPTSCKCSASRIWCSDPSPGIVAFPRLEPN. Residues 32-430 are Extracellular-facing; the sequence is CPTSCKCSAS…DVTDKTGREH (399 aa). Asparagine 67, asparagine 95, and asparagine 121 each carry an N-linked (GlcNAc...) asparagine glycan. LRR repeat units lie at residues 92–113 and 116–137; these read GLRN…AFLK and NLQH…HFRH. One can recognise an LRRCT domain in the interval 148-196; sequence NPFTCSCDIMWIKTLQEAKSSPDTQDLYCLNESSKNIPLANLQIPNCGL. Intrachain disulfides connect cysteine 152–cysteine 176 and cysteine 154–cysteine 194. Asparagine 178, asparagine 205, asparagine 241, asparagine 254, asparagine 280, asparagine 325, asparagine 338, and asparagine 412 each carry an N-linked (GlcNAc...) asparagine glycan. Ig-like C2-type domains are found at residues 197 to 282 and 295 to 365; these read PSAN…VNLT and PTSD…IAKN. Cysteine 218 and cysteine 266 are oxidised to a cystine. Residues cysteine 302 and cysteine 345 are joined by a disulfide bond. Residues 431-454 form a helical membrane-spanning segment; it reads LSVYAVVVIASVVGFCLLVMLFLL. The interaction with MAPK8IP3/JIP3 stretch occupies residues 455–466; it reads KLARHSKFGMKG. The Cytoplasmic portion of the chain corresponds to 455–822; the sequence is KLARHSKFGM…ASPVYLDILG (368 aa). Positions 475–498 are disordered; it reads DDSASPLHHISNGSNTPSSSEGGP. Residues 485–495 are compositionally biased toward polar residues; the sequence is SNGSNTPSSSE. Residue tyrosine 516 is modified to Phosphotyrosine; by autocatalysis. Residues 538-807 form the Protein kinase domain; it reads IVLKRELGEG…KNIKGIHTLL (270 aa). ATP contacts are provided by residues 544–552 and lysine 572; that span reads LGEGAFGKV. Aspartate 676 acts as the Proton acceptor in catalysis. 4 positions are modified to phosphotyrosine; by autocatalysis: tyrosine 702, tyrosine 706, tyrosine 707, and tyrosine 817.

The protein belongs to the protein kinase superfamily. Tyr protein kinase family. Insulin receptor subfamily. In terms of assembly, exists in a dynamic equilibrium between monomeric (low affinity) and dimeric (high affinity) structures. Interacts (phosphorylated upon activation by BDNF) with SHC1; mediates SHC1 phosphorylation and activation. Interacts (phosphorylated upon activation by BDNF) with PLCG1 and/or PLCG2; mediates PLCG1 phosphorylation and activation. Interacts with SH2B1 and SH2B2. Interacts with NGFR; may regulate the ligand specificity of the receptor. Interacts with SORCS2; this interaction is important for normal targeting to post-synaptic densities in response to high-frequency stimulation. Interacts (phosphorylated upon ligand-binding) with SH2D1A; regulates NTRK2. Interacts with SQSTM1 and KIDINS220. Interacts (phosphorylated upon ligand-binding) with FRS2; activates the MAPK signaling pathway. Interacts with APPL1. Interacts with MAPK8IP3/JIP3 and KLC1; interaction with KLC1 is mediated by MAPK8IP3/JIP3. Interacts with SORL1; this interaction facilitates NTRK2 trafficking between synaptic plasma membranes, postsynaptic densities and cell soma, hence positively regulates BDNF signaling. Interacts with SLITRK2. Phosphorylated. Undergoes ligand-mediated autophosphorylation that is required for interaction with SHC1 and PLCG1 and other downstream effectors. Isoform TrkB-T-Shc is not phosphorylated. In terms of processing, ubiquitinated. Undergoes polyubiquitination upon activation; regulated by NGFR. Ubiquitination regulates the internalization of the receptor. As to expression, isoform TrkB is expressed in the central and peripheral nervous system. In the central nervous system (CNS), expression is observed in the cerebral cortex, hippocampus, thalamus, choroid plexus, granular layer of the cerebellum, brain stem, and spinal cord. In the peripheral nervous system, it is expressed in many cranial ganglia, the ophthalmic nerve, the vestibular system, multiple facial structures, the submaxillary glands, and dorsal root ganglia. Isoform TrkB-T1 is mainly expressed in the brain but also detected in other tissues including pancreas, kidney and heart. Isoform TrkB-T-Shc is predominantly expressed in the brain.

It is found in the cell membrane. Its subcellular location is the endosome membrane. The protein localises to the early endosome membrane. It localises to the cell projection. The protein resides in the axon. It is found in the dendrite. Its subcellular location is the cytoplasm. The protein localises to the perinuclear region. It localises to the postsynaptic density. It carries out the reaction L-tyrosyl-[protein] + ATP = O-phospho-L-tyrosyl-[protein] + ADP + H(+). With respect to regulation, the neuronal activity and the influx of calcium positively regulate the kinase activity and the internalization of the receptor which are both important for active signaling. Regulated by NGFR that may control the internalization of the receptor. NGFR may also stimulate the activation by BDNF compared to NTF3 and NTF4. SH2D1A inhibits the autophosphorylation of the receptor, and alters the recruitment and activation of downstream effectors and signaling cascades. The formation of active receptors dimers able to fully transduce the ligand-mediated signal, may be negatively regulated by the formation of inactive heterodimers with the non-catalytic isoforms. Functionally, receptor tyrosine kinase involved in the development and the maturation of the central and the peripheral nervous systems through regulation of neuron survival, proliferation, migration, differentiation, and synapse formation and plasticity. Receptor for BDNF/brain-derived neurotrophic factor and NTF4/neurotrophin-4. Alternatively can also bind NTF3/neurotrophin-3 which is less efficient in activating the receptor but regulates neuron survival through NTRK2. Upon ligand-binding, undergoes homodimerization, autophosphorylation and activation. Recruits, phosphorylates and/or activates several downstream effectors including SHC1, FRS2, SH2B1, SH2B2 and PLCG1 that regulate distinct overlapping signaling cascades. Through SHC1, FRS2, SH2B1, SH2B2 activates the GRB2-Ras-MAPK cascade that regulates for instance neuronal differentiation including neurite outgrowth. Through the same effectors controls the Ras-PI3 kinase-AKT1 signaling cascade that mainly regulates growth and survival. Through PLCG1 and the downstream protein kinase C-regulated pathways controls synaptic plasticity. Thereby, plays a role in learning and memory by regulating both short term synaptic function and long-term potentiation. PLCG1 also leads to NF-Kappa-B activation and the transcription of genes involved in cell survival. Hence, it is able to suppress anoikis, the apoptosis resulting from loss of cell-matrix interactions. May also play a role in neutrophin-dependent calcium signaling in glial cells and mediate communication between neurons and glia. The chain is BDNF/NT-3 growth factors receptor (NTRK2) from Homo sapiens (Human).